A 284-amino-acid chain; its full sequence is Transcription factor lir-3 (284 aa).

Residues Glu50–Glu60 are compositionally biased toward basic and acidic residues. A disordered region spans residues Glu50 to Arg71. The segment at Tyr224 to His247 adopts a C2H2-type zinc-finger fold.

In terms of tissue distribution, expressed in FLP neurons.

The protein resides in the nucleus. Positively regulates the RNA polymerase III-associated transcription of small non-coding RNAs. The protein is Transcription factor lir-3 of Caenorhabditis elegans.